Reading from the N-terminus, the 338-residue chain is MAAAEAEVVSPLIVDTAPDTSGTAEASVAASVAEAARTESQAPASKAALAAKLMSLSGVFAVHKPKGPTSAELLNRLKEKLLAEAGMPSPEWNKRQKQTLKVGHGGTLDSAAQGVLVVGIGRGTKMLTSMLSGSKRYITIGELGKATDTLDSTGKVTEEKPYDKITREDIEGILQKFTGNIMQVPPLYSALKKDGQRLSTLMKKGKVVEARPARPVTVHSISLLKFQPPFFTLDVECGGGFYIRSLVSDIGKELSSCASVLELTRTKQGPFTLAQHALPEDRWTIDDIEQSLERCTSLLPEELTFKKLKSDNSSDQVISCGYITLRDTKREDDAVKTL.

Ala2 bears the N-acetylalanine mark. Asp109 functions as the Nucleophile in the catalytic mechanism.

This sequence belongs to the pseudouridine synthase TruB family.

It localises to the nucleus. The protein localises to the cytoplasm. The protein resides in the cytosol. It carries out the reaction a uridine in mRNA = a pseudouridine in mRNA. It catalyses the reaction a uridine in tRNA = a pseudouridine in tRNA. The catalysed reaction is uridine(55) in tRNA = pseudouridine(55) in tRNA. Pseudouridine synthase that catalyzes pseudouridylation of mRNAs and tRNAs. Mediates pseudouridylation of mRNAs with the consensus sequence 5'-GUUCNANNC-3', harboring a stem-loop structure. Constitutes the major pseudouridine synthase acting on mRNAs. Also catalyzes pseudouridylation of some tRNAs, including synthesis of pseudouridine(55) from uracil-55, in the psi GC loop of a subset of tRNAs. Promotes the processing of pri-let-7 microRNAs (pri-miRNAs) independently of its RNA pseudouridylate synthase activity. Acts by binding to the stem-loop structure on pri-let-7, preventing LIN28-binding (LIN28A and/or LIN28B), thereby enhancing the interaction between pri-let-7 and the microprocessor DGCR8, which mediates miRNA maturation. In Mus musculus (Mouse), this protein is Pseudouridylate synthase TRUB1.